A 195-amino-acid polypeptide reads, in one-letter code: Shikimate kinase (195 aa).

26–31 is a binding site for ATP; the sequence is GSGKST. Serine 30 serves as a coordination point for Mg(2+). The substrate site is built by aspartate 48, arginine 72, and glycine 94. Arginine 132 is an ATP binding site. Substrate is bound at residue arginine 151.

The protein belongs to the shikimate kinase family. Monomer. It depends on Mg(2+) as a cofactor.

Its subcellular location is the cytoplasm. The enzyme catalyses shikimate + ATP = 3-phosphoshikimate + ADP + H(+). It functions in the pathway metabolic intermediate biosynthesis; chorismate biosynthesis; chorismate from D-erythrose 4-phosphate and phosphoenolpyruvate: step 5/7. Its function is as follows. Catalyzes the specific phosphorylation of the 3-hydroxyl group of shikimic acid using ATP as a cosubstrate. This chain is Shikimate kinase, found in Synechococcus sp. (strain RCC307).